The primary structure comprises 171 residues: Endoribonuclease YbeY (171 aa).

Residues histidine 126, histidine 130, and histidine 136 each coordinate Zn(2+).

Belongs to the endoribonuclease YbeY family. The cofactor is Zn(2+).

Its subcellular location is the cytoplasm. In terms of biological role, single strand-specific metallo-endoribonuclease involved in late-stage 70S ribosome quality control and in maturation of the 3' terminus of the 16S rRNA. The sequence is that of Endoribonuclease YbeY from Rhizobium leguminosarum bv. trifolii (strain WSM2304).